The chain runs to 517 residues: MPYQPANSGGTSGGSKAAAKMAQLKFWNKQNSSKQQQQDKDKDAADGGNNTSGGGTGSNSNGDAKSEAKNGKRNWLHTPEQLISGHAVYLVKFFGNLSVDQPKGIEVVKEAIRKLQFAQQMKKAETGTQEKFKKLEITISIKGVAIQEPRTHKILHQFPLYNISYCADEKGVKKFFSFIAKTVKTQDGSDPTSNGHANGNGDGSAKVEESHECFVFISNKLASDITLTIGQAFDLAYRKYMDSTEKTNLSKAQQQINHLQQTVNVYKERLREVSAKLPKAELDALLFNLGIKDILEAPTTEPQNGIEVASEALSNGKLDDDKLLIDTNSTTASTHSASPSSFLPIVPPRNNLSSQISIGGKSNSQKMDELLLNSDSDSDFDPRADETQEIGGTGRSAISNMFGFEPANSFGQHLFSNNNDHKLQNNNSSLLITSNNNSINSSGFSSELNITPPLLAPPPKIAAPRRLNSVTTGNGLNGNTDLFGSDPFELNNGPNIFKQNQLNLDDFSLESLDPLRK.

A compositionally biased stretch (low complexity) spans 1 to 19; sequence MPYQPANSGGTSGGSKAAA. Disordered stretches follow at residues 1-70 and 185-205; these read MPYQ…EAKN and TQDG…DGSA. One can recognise a PID domain in the interval 83–265; sequence ISGHAVYLVK…INHLQQTVNV (183 aa). Residues 185-197 show a composition bias toward polar residues; the sequence is TQDGSDPTSNGHA. 5 positions are modified to phosphoserine: serine 338, serine 374, serine 376, serine 378, and serine 469. Positions 374–393 are disordered; it reads SDSDSDFDPRADETQEIGGT. Threonine 480 is modified (phosphothreonine).

This sequence belongs to the ced-6 family. May interact with Drpr.

The protein resides in the cytoplasm. Plays a role in axon pruning in larval mushroom body neurons during metamorphosis. Plays a role in the infiltration of glial cell processes into mushroom body lobes and the subsequent engulfment of degenerating axon branches. Involved in Drpr-mediated phagocytosis of apoptotic cells. Required for bacterial phagocytosis. During neuromuscular junction development, required for the clearance of pruned ghost boutons and presynaptic debris and for normal synaptic growth. The chain is PTB domain-containing adapter protein ced-6 (ced-6) from Drosophila melanogaster (Fruit fly).